The sequence spans 361 residues: Probable mannitol dehydrogenase (361 aa).

Positions 51, 73, 104, 107, 110, 118, and 167 each coordinate Zn(2+).

Belongs to the zinc-containing alcohol dehydrogenase family. Zn(2+) serves as cofactor.

It catalyses the reaction D-mannitol + NAD(+) = D-mannose + NADH + H(+). In terms of biological role, oxidizes mannitol to mannose. Provides the initial step by which translocated mannitol is committed to central metabolism and, by regulating mannitol pool size, is important in regulating salt tolerance at the cellular level. This is Probable mannitol dehydrogenase (ELI3) from Mesembryanthemum crystallinum (Common ice plant).